The primary structure comprises 380 residues: E3 ubiquitin-protein ligase RNF13 (380 aa).

A signal peptide spans 1-34; sequence MLLSIGMLMLSATQVYTILTVQLFAFLNLLPVEA. The Lumenal segment spans residues 35-182; the sequence is DILAYNFENA…VPEFSLPLEY (148 aa). One can recognise a PA domain in the interval 65-160; that stretch reads KGFLINSKPE…GESSANSLKD (96 aa). The N-linked (GlcNAc...) asparagine glycan is linked to asparagine 88. The chain crosses the membrane as a helical span at residues 183-203; that stretch reads YLIPFLIIVGICLILIVIFMI. At 204 to 380 the chain is on the cytoplasmic side; the sequence is TKFVQDRHRA…ERDYNIANTV (177 aa). The RING-type; atypical zinc finger occupies 240-282; sequence CAICLDEYEDGDKLRILPCSHAYHCKCVDPWLTKTKKTCPVCK. Positions 285 to 380 are disordered; the sequence is VVPSQGDSDS…ERDYNIANTV (96 aa). Composition is skewed to acidic residues over residues 292–304 and 339–356; these read SDSDTDSSQEENE and SDYEEDDNDTDSSDAENE.

Interacts with ERN1. In terms of processing, autoubiquitinated.

The protein localises to the endoplasmic reticulum membrane. Its subcellular location is the late endosome membrane. It localises to the lysosome membrane. The protein resides in the nucleus inner membrane. The enzyme catalyses S-ubiquitinyl-[E2 ubiquitin-conjugating enzyme]-L-cysteine + [acceptor protein]-L-lysine = [E2 ubiquitin-conjugating enzyme]-L-cysteine + N(6)-ubiquitinyl-[acceptor protein]-L-lysine.. Its pathway is protein modification; protein ubiquitination. Its function is as follows. E3 ubiquitin-protein ligase that regulates cell proliferation. Involved in apoptosis regulation. Mediates ER stress-induced activation of JNK signaling pathway and apoptosis by promoting ERN1 activation and splicing of XBP1 mRNA. Also involved in protein trafficking and localization. In Bos taurus (Bovine), this protein is E3 ubiquitin-protein ligase RNF13 (RNF13).